The chain runs to 205 residues: MDKKPCNSQDVEVRKGPWTMEEDLILINYIANHGEGVWNSLARSAGLKRTGKSCRLRWLNYLRPDVRRGNITPEEQLLIMELHAKWGNRWSKIAKTLPGRTDNEIKNYWRTRIQKHMEQGDQSSSTTFNNGQMNLDHSCNDQASSSQMSACGPVVDHTAVDQSSYSPHSFNGNDHTFQAPFPTDQSNDNMWSMEDFWSMQLLNGD.

HTH myb-type domains follow at residues 10–62 (DVEV…LNYL) and 63–117 (RPDV…QKHM). DNA-binding regions (H-T-H motif) lie at residues 38–62 (WNSL…LNYL) and 90–113 (WSKI…RTRI).

In terms of tissue distribution, expressed only in flowers.

Its subcellular location is the nucleus. Its function is as follows. Transcription factor. In Antirrhinum majus (Garden snapdragon), this protein is Myb-related protein 305.